A 557-amino-acid chain; its full sequence is 6-phosphofructo-2-kinase/fructose-2,6-bisphosphatase 2 (557 aa).

A compositionally biased stretch (low complexity) spans 1 to 16 (MSENSTFSTEDSSSSS). Positions 1–21 (MSENSTFSTEDSSSSSYKPHA) are disordered. Ser2 is subject to N-acetylserine. Residues 2-251 (SENSTFSTED…VYYLMNIHVH (250 aa)) form a 6-phosphofructo-2-kinase region. Ser32 bears the Phosphoserine; by PKA mark. ATP is bound at residue 48–56 (GLPARGKTY). Residues Arg81 and Arg105 each coordinate beta-D-fructose 6-phosphate. Asp131 is a catalytic residue. Thr133 and Arg139 together coordinate beta-D-fructose 6-phosphate. Residue Cys161 is part of the active site. 170 to 175 (NILEVK) is an ATP binding site. Residues Lys175, Arg196, and Tyr200 each coordinate beta-D-fructose 6-phosphate. The fructose-2,6-bisphosphatase stretch occupies residues 252-557 (PRTIYLCRHG…PSMASLTLLS (306 aa)). Arg259 provides a ligand contact to beta-D-fructose 2,6-bisphosphate. Residue His260 is the Tele-phosphohistidine intermediate of the active site. Asn266 and Gly272 together coordinate beta-D-fructose 2,6-bisphosphate. Glu329 acts as the Proton donor/acceptor in catalysis. Beta-D-fructose 2,6-bisphosphate-binding residues include Tyr340, Arg354, Lys358, Tyr369, Gln395, and Arg399. 351 to 354 (FALR) serves as a coordination point for ATP. ATP-binding positions include 395–399 (QAVMR) and Tyr431. The tract at residues 449–495 (RDKPTHNFPKSQTPVRMRRNSFTPLSSSNTIRRPRNYSVGSRPLKPL) is disordered. Over residues 456–479 (FPKSQTPVRMRRNSFTPLSSSNTI) the composition is skewed to polar residues. Phosphoserine is present on Ser469. Thr471 is modified (phosphothreonine). Position 478 is a phosphothreonine; by PKC (Thr478). Residues Ser486 and Ser496 each carry the phosphoserine modification.

In the C-terminal section; belongs to the phosphoglycerate mutase family. As to quaternary structure, homodimer. Forms a heterodimer with PFKFB3. Phosphorylation by AMPK stimulates activity.

The catalysed reaction is beta-D-fructose 2,6-bisphosphate + H2O = beta-D-fructose 6-phosphate + phosphate. It carries out the reaction beta-D-fructose 6-phosphate + ATP = beta-D-fructose 2,6-bisphosphate + ADP + H(+). Phosphorylation results in the activation of the kinase activity. Its function is as follows. Synthesis and degradation of fructose 2,6-bisphosphate. This chain is 6-phosphofructo-2-kinase/fructose-2,6-bisphosphatase 2 (Pfkfb2), found in Rattus norvegicus (Rat).